The chain runs to 372 residues: Cyclin-A3-2 (372 aa).

The disordered stretch occupies residues 53-73; it reads NQKKETQKPKRNLKPPPAKQI.

It belongs to the cyclin family. Cyclin AB subfamily.

This Arabidopsis thaliana (Mouse-ear cress) protein is Cyclin-A3-2 (CYCA3-2).